Consider the following 509-residue polypeptide: BPI fold-containing family C protein (509 aa).

The first 23 residues, 1–23 (MRTKQVPVLWACFLLWSLYIASS), serve as a signal peptide directing secretion. Asn63, Asn79, Asn92, Asn113, and Asn117 each carry an N-linked (GlcNAc...) asparagine glycan. The cysteines at positions 161 and 202 are disulfide-linked. 5 N-linked (GlcNAc...) asparagine glycosylation sites follow: Asn215, Asn227, Asn357, Asn374, and Asn457.

Belongs to the BPI/LBP/Plunc superfamily. BPI/LBP family.

It is found in the secreted. The protein is BPI fold-containing family C protein (Bpifc) of Mus musculus (Mouse).